The primary structure comprises 369 residues: 3-dehydroquinate synthase (369 aa).

NAD(+)-binding positions include 80–85 (DGEQYK), 114–118 (GVIGD), 138–139 (TT), Lys-151, Lys-160, and 178–181 (TLKT). Zn(2+)-binding residues include Glu-193, His-256, and His-273.

Belongs to the sugar phosphate cyclases superfamily. Dehydroquinate synthase family. Requires Co(2+) as cofactor. It depends on Zn(2+) as a cofactor. NAD(+) is required as a cofactor.

The protein localises to the cytoplasm. It catalyses the reaction 7-phospho-2-dehydro-3-deoxy-D-arabino-heptonate = 3-dehydroquinate + phosphate. The protein operates within metabolic intermediate biosynthesis; chorismate biosynthesis; chorismate from D-erythrose 4-phosphate and phosphoenolpyruvate: step 2/7. In terms of biological role, catalyzes the conversion of 3-deoxy-D-arabino-heptulosonate 7-phosphate (DAHP) to dehydroquinate (DHQ). This is 3-dehydroquinate synthase from Psychrobacter cryohalolentis (strain ATCC BAA-1226 / DSM 17306 / VKM B-2378 / K5).